We begin with the raw amino-acid sequence, 469 residues long: Alpha-2C adrenergic receptor (469 aa).

Residues 1–29 (MDLQLTTNSTDSGDRGGSSNESLQRQPPS) form a disordered region. Over 1–36 (MDLQLTTNSTDSGDRGGSSNESLQRQPPSQYSPAEV) the chain is Extracellular. Asn-8 and Asn-20 each carry an N-linked (GlcNAc...) asparagine glycan. Residues 37 to 62 (AGLAAVVSFLIVFTIVGNVLVVIAVL) form a helical membrane-spanning segment. At 63 to 73 (TSRALKAPQNL) the chain is on the cytoplasmic side. The helical transmembrane segment at 74–99 (FQVSLASADILVATLVMPFSLANELM) threads the bilayer. Residues 100 to 109 (NYWYFGKVWC) are Extracellular-facing. Cys-109 and Cys-187 are joined by a disulfide. A helical membrane pass occupies residues 110 to 132 (VIYLALDVLFCTSSIVHLCAISL). Topologically, residues 133–154 (DRYWSVTQAVEYNLKRTPRRIK) are cytoplasmic. The chain crosses the membrane as a helical span at residues 155 to 175 (GIIVTVWLISAVISFPPLISL). At 176 to 194 (YRDPEDDLYPQCELNDETW) the chain is on the extracellular side. Residues 195 to 216 (YILSSCIGSFFAPCIIMVLVYV) form a helical membrane-spanning segment. Topologically, residues 217-386 (RIYRVAKLRT…RKVTQAREKR (170 aa)) are cytoplasmic. Disordered regions lie at residues 232 to 261 (KRTV…AAAA) and 279 to 353 (HHHH…SRLS). Basic residues predominate over residues 279–296 (HHHHHLHHHHHHHHHQLR). The segment covering 301–310 (LEDIELEESS) has biased composition (acidic residues). Residues 331–353 (RGFSFSFSSTKGGQSAGAGSRLS) are compositionally biased toward low complexity. The helical transmembrane segment at 387-407 (FTFVLAVVMGVFVVCWFPFFF) threads the bilayer. The Extracellular segment spans residues 408–427 (TYSLYGICREACQVPETLFK). A helical membrane pass occupies residues 428–448 (FFFWIGYCNSSLNPVIYTIFN). Residues 449-469 (QDFRRSFKHILFKKKKKTSLQ) are Cytoplasmic-facing.

Belongs to the G-protein coupled receptor 1 family. Adrenergic receptor subfamily. ADRA2C sub-subfamily.

It localises to the cell membrane. Its function is as follows. Alpha-2 adrenergic receptors mediate the catecholamine-induced inhibition of adenylate cyclase through the action of G proteins. The chain is Alpha-2C adrenergic receptor (ADRA2C) from Didelphis virginiana (North American opossum).